Consider the following 115-residue polypeptide: U3-lycotoxin-Ls1a (115 aa).

Positions 1 to 20 (MKFVLLFGVLLVTLFSYSSA) are cleaved as a signal peptide. Residues 21–44 (EMLDDFDQADEDELLSLIEKEEAR) constitute a propeptide that is removed on maturation. 4 disulfide bridges follow: Cys48/Cys63, Cys55/Cys72, Cys62/Cys87, and Cys74/Cys85.

This sequence belongs to the neurotoxin 19 (CSTX) family. 01 subfamily. Expressed by the venom gland.

It localises to the secreted. The polypeptide is U3-lycotoxin-Ls1a (Lycosa singoriensis (Wolf spider)).